Consider the following 675-residue polypeptide: Protein PALS1 (675 aa).

Residues 1-345 form a required for the correct localization of PALS1 and PATJ at cell-cell contacts and the normal formation of tight junctions and adherens junctions region; that stretch reads MTTSYMNGHV…QQIKPPPAKE (345 aa). Phosphoserine is present on residues Ser14 and Ser25. The interaction with PARD6B stretch occupies residues 21–140; that stretch reads LDLASPEEYP…LKHIQHTLVD (120 aa). Positions 51–79 are disordered; it reads RRSAQLERIRQQQEDMRRRREEEGKKQEL. The segment covering 54 to 79 has biased composition (basic and acidic residues); sequence AQLERIRQQQEDMRRRREEEGKKQEL. Ser83 and Ser84 each carry phosphoserine. 2 consecutive L27 domains span residues 120-177 and 179-235; these read NILD…SKAS and PFPL…MQLE. The tract at residues 181 to 243 is interaction with LIN7C; sequence PLIANVQDLV…LEPITDERVY (63 aa). In terms of domain architecture, PDZ spans 256 to 336; that stretch reads IVRIEKARDI…TLTFVLIPSQ (81 aa). One can recognise an SH3 domain in the interval 345–417; the sequence is ETVIHVKAHF…PGKSFQQQRE (73 aa). The Guanylate kinase-like domain occupies 479 to 660; the sequence is KRPIILIGPQ…AYQELLRLIN (182 aa). An ATP-binding site is contributed by 486 to 493; it reads GPQNCGQN.

The protein belongs to the MAGUK family. As to quaternary structure, heterodimer with MPP1. Forms a heterotrimeric complex composed of PALS1, LIN7B and PATJ; the N-terminal L27 domain of PALS1 interacts with the L27 domain of PATJ and the C-terminal L27 domain of PALS1 interacts with the L27 domain of LIN7B. Component of a complex composed of PALS1, CRB1 and MPP4. Component of a complex whose core is composed of ARHGAP17, AMOT, PALS1, PATJ and PARD3/PAR3. Component of a complex composed of PALS1, CRB1 and EPB41L5. Within the complex, interacts (via HOOK domain) with EPB41L5 (via FERM domain), and interacts with CRB1 (via intracellular domain). Component of a complex composed of PALS1, MPP3 and CRB1; PALS1 acts as a bridging protein between MPP3 (via guanylate kinase-like domain) and CRB1. Component of a complex composed of CRB3, PALS1 and PATJ. As part of the Crumbs complex; interacts with WWP1, the interaction is enhanced by AMOTL2 and facilitates WWP1 localization to the plasma membrane. The Crumbs complex promotes monoubiquitination of AMOTL2 by WWP1, which activates the Hippo signaling pathway. Interacts (via PDZ domain) with PATJ (via N-terminus). Interacts with EZR. Interacts (via PDZ domain) with CRB1 (via C-terminal ERLI motif). While the PDZ domain is sufficient for interaction with CRB1, the adjacent SH3 and guanylate kinase-like domains are likely to contribute to a high affinity interaction. Interacts with WWTR1/TAZ (via WW domain). Interacts with MPP7. Interacts (via PDZ domain) with CRB3 (via C-terminus). Interacts with LIN7C. Interacts with MPDZ. Interacts with PARD6B. Interacts with SC6A1. Interacts with CDH5; the interaction promotes PALS1 localization to cell junctions and is required for CDH5-mediated vascular lumen formation and endothelial cell. Interacts with NPHP1 (via coiled coil and SH3 domains). Interacts with NPHP4. Interacts with CRB2. Expressed in the retinal pigment epithelium (at protein level). Expressed in the vascular plexus of the retina (at protein level). In the brain, expressed in the dentate gyrus of hippocampus, striatum and cerebellum (at protein level). Expressed in the sciatic nerve (at protein level). Expressed in the kidney nephron (at protein level). Expressed in the lung, and heart. Expressed in placenta, brain, skeletal muscles, pancreas and liver.

The protein resides in the golgi apparatus. It is found in the cell membrane. The protein localises to the endomembrane system. Its subcellular location is the cell junction. It localises to the tight junction. The protein resides in the adherens junction. It is found in the cell projection. The protein localises to the axon. Its subcellular location is the perikaryon. It localises to the apical cell membrane. Plays a role in tight junction biogenesis and in the establishment of cell polarity in epithelial cells. Also involved in adherens junction biogenesis by ensuring correct localization of the exocyst complex protein EXOC4/SEC8 which allows trafficking of adherens junction structural component CDH1 to the cell surface. Plays a role through its interaction with CDH5 in vascular lumen formation and endothelial membrane polarity. Required during embryonic and postnatal retinal development. Required for the maintenance of cerebellar progenitor cells in an undifferentiated proliferative state, preventing premature differentiation, and is required for cerebellar histogenesis, fissure formation, cerebellar layer organization and cortical development. Plays a role in neuronal progenitor cell survival, potentially via promotion of mTOR signaling. Plays a role in the radial and longitudinal extension of the myelin sheath in Schwann cells. May modulate SC6A1/GAT1-mediated GABA uptake by stabilizing the transporter. May play a role in the T-cell receptor-mediated activation of NF-kappa-B. Required for localization of EZR to the apical membrane of parietal cells and may play a role in the dynamic remodeling of the apical cytoskeleton. Required for the normal polarized localization of the vesicular marker STX4. Required for the correct trafficking of the myelin proteins PMP22 and MAG. Involved in promoting phosphorylation and cytoplasmic retention of transcriptional coactivators YAP1 and WWTR1/TAZ which leads to suppression of TGFB1-dependent transcription of target genes such as CCN2/CTGF, SERPINE1/PAI1, SNAI1/SNAIL1 and SMAD7. This Mus musculus (Mouse) protein is Protein PALS1.